A 446-amino-acid polypeptide reads, in one-letter code: MMITLRKLPLAVAVAAGVMSAQAMAVDFHGYARSGIGWTGSGGEQQCFQTTGAQSKYRLGNECETYAELKLGQEVWKEGDKSFYFDTNVAYSVAQQNDWEATDPAFREANVQGKNLIEWLPGSTIWAGKRFYQRHDVHMIDFYYWDISGPGAGLENIDVGFGKLSLAATRSSEAGGSSSFASNNIYDYTNETANDVFDVRLAQMEINPGGTLELGVDYGRANLRDNYRLVDGASKDGWLFTAEHTQSVLKGFNKFVVQYATDSMTSQGKGLSQGSGVAFDNEKFAYNINNNGHMLRILDHGAISMGDNWDMMYVGMYQDINWDNDNGTKWWTVGIRPMYKWTPIMSTVMEIGYDNVESQRTGDKNNQYKITLAQQWQAGDSIWSRPAIRVFATYAKWDEKWGYDYTGSSSTNPYYGKAVSADFNGGSFGRGDSDEWTFGAQMEIWW.

An N-terminal signal peptide occupies residues 1–25 (MMITLRKLPLAVAVAAGVMSAQAMA).

It belongs to the porin LamB (TC 1.B.3) family. In terms of assembly, homotrimer formed of three 18-stranded antiparallel beta-barrels, containing three independent channels.

The protein resides in the cell outer membrane. The enzyme catalyses beta-maltose(in) = beta-maltose(out). Functionally, involved in the transport of maltose and maltodextrins. The protein is Maltoporin of Escherichia coli O127:H6 (strain E2348/69 / EPEC).